The primary structure comprises 333 residues: Protein RecA (333 aa).

ATP is bound at residue 69 to 76 (GPESSGKT).

This sequence belongs to the RecA family.

Its subcellular location is the cytoplasm. Functionally, can catalyze the hydrolysis of ATP in the presence of single-stranded DNA, the ATP-dependent uptake of single-stranded DNA by duplex DNA, and the ATP-dependent hybridization of homologous single-stranded DNAs. It interacts with LexA causing its activation and leading to its autocatalytic cleavage. The polypeptide is Protein RecA (Mesoplasma florum (strain ATCC 33453 / NBRC 100688 / NCTC 11704 / L1) (Acholeplasma florum)).